The sequence spans 736 residues: Catalase-peroxidase (736 aa).

The disordered stretch occupies residues 1–25; it reads MSENGKCPVTGKTSKPVAGGGTSNQ. Positions 96–224 form a cross-link, tryptophyl-tyrosyl-methioninium (Trp-Tyr) (with M-250); sequence WHSAGTYRMG…LAAVQMGLIY (129 aa). H97 (proton acceptor) is an active-site residue. Positions 224–250 form a cross-link, tryptophyl-tyrosyl-methioninium (Tyr-Met) (with W-96); sequence YVNPEGPDGNPDPIASGKDVRETFARM. Heme b is bound at residue H265. The disordered stretch occupies residues 294-313; it reads GWKSSHGRGKGGDTISSGIE.

The protein belongs to the peroxidase family. Peroxidase/catalase subfamily. In terms of assembly, homodimer or homotetramer. Requires heme b as cofactor. Post-translationally, formation of the three residue Trp-Tyr-Met cross-link is important for the catalase, but not the peroxidase activity of the enzyme.

The catalysed reaction is H2O2 + AH2 = A + 2 H2O. The enzyme catalyses 2 H2O2 = O2 + 2 H2O. Its function is as follows. Bifunctional enzyme with both catalase and broad-spectrum peroxidase activity. This chain is Catalase-peroxidase, found in Desulfatibacillum aliphaticivorans.